A 185-amino-acid chain; its full sequence is ATP synthase subunit delta (185 aa).

The protein belongs to the ATPase delta chain family. As to quaternary structure, F-type ATPases have 2 components, F(1) - the catalytic core - and F(0) - the membrane proton channel. F(1) has five subunits: alpha(3), beta(3), gamma(1), delta(1), epsilon(1). CF(0) has four main subunits: a(1), b(1), b'(1) and c(10-14). The alpha and beta chains form an alternating ring which encloses part of the gamma chain. F(1) is attached to F(0) by a central stalk formed by the gamma and epsilon chains, while a peripheral stalk is formed by the delta, b and b' chains.

It is found in the cellular thylakoid membrane. F(1)F(0) ATP synthase produces ATP from ADP in the presence of a proton or sodium gradient. F-type ATPases consist of two structural domains, F(1) containing the extramembraneous catalytic core and F(0) containing the membrane proton channel, linked together by a central stalk and a peripheral stalk. During catalysis, ATP synthesis in the catalytic domain of F(1) is coupled via a rotary mechanism of the central stalk subunits to proton translocation. Functionally, this protein is part of the stalk that links CF(0) to CF(1). It either transmits conformational changes from CF(0) to CF(1) or is implicated in proton conduction. In Cyanothece sp. (strain PCC 7425 / ATCC 29141), this protein is ATP synthase subunit delta.